The following is a 251-amino-acid chain: Triosephosphate isomerase (251 aa).

9 to 11 (NWK) lines the substrate pocket. His-95 (electrophile) is an active-site residue. The active-site Proton acceptor is the Glu-167. Substrate contacts are provided by residues Gly-173, Ser-213, and 234-235 (GG). Phosphoserine is present on Ser-213.

It belongs to the triosephosphate isomerase family. Homodimer.

It is found in the cytoplasm. It carries out the reaction D-glyceraldehyde 3-phosphate = dihydroxyacetone phosphate. The protein operates within carbohydrate biosynthesis; gluconeogenesis. It participates in carbohydrate degradation; glycolysis; D-glyceraldehyde 3-phosphate from glycerone phosphate: step 1/1. Its function is as follows. Involved in the gluconeogenesis. Catalyzes stereospecifically the conversion of dihydroxyacetone phosphate (DHAP) to D-glyceraldehyde-3-phosphate (G3P). The sequence is that of Triosephosphate isomerase from Bacillus cytotoxicus (strain DSM 22905 / CIP 110041 / 391-98 / NVH 391-98).